The following is a 365-amino-acid chain: Ribosome biogenesis regulatory protein homolog (365 aa).

Methionine 1 is modified (N-acetylmethionine). The residue at position 5 (serine 5) is a Phosphoserine. Residues lysine 154 and lysine 226 each participate in a glycyl lysine isopeptide (Lys-Gly) (interchain with G-Cter in SUMO2) cross-link. Residues 233 to 253 form a disordered region; that stretch reads GRFQERLPKEKVPRGSGKKRK. Positions 235-245 are enriched in basic and acidic residues; that stretch reads FQERLPKEKVP. A Glycyl lysine isopeptide (Lys-Gly) (interchain with G-Cter in SUMO2) cross-link involves residue lysine 266. Arginine 273 bears the Citrulline mark. Residues 280-365 form a disordered region; it reads PQLDVTRATN…GQRPGGKRRK (86 aa). Basic residues predominate over residues 302–325; it reads KRRKMSQKGKRKGGRQGPGGKRKG. The segment covering 337–350 has biased composition (gly residues); it reads GLGGKMNSGPPGLG. Residues 351–365 are compositionally biased toward basic residues; that stretch reads GKRKGGQRPGGKRRK.

It belongs to the RRS1 family. Component of a hexameric 5S RNP precursor complex, composed of 5S RNA, RRS1, RPF2/BXDC1, RPL5, RPL11 and HEATR3; this complex acts as a precursor for ribosome assembly. Citrullinated by PADI4.

Its subcellular location is the nucleus. The protein resides in the nucleolus. Involved in ribosomal large subunit assembly. May regulate the localization of the 5S RNP/5S ribonucleoprotein particle to the nucleolus. This Homo sapiens (Human) protein is Ribosome biogenesis regulatory protein homolog (RRS1).